Here is a 288-residue protein sequence, read N- to C-terminus: Ankyrin repeat and SOCS box protein 8 (288 aa).

Residue Ser17 is modified to Phosphoserine. ANK repeat units lie at residues 52 to 81, 85 to 113, 117 to 146, and 150 to 179; these read GTLK…EVNA, YNRT…NPNA, NRDT…SVNA, and NNDT…EVRV. Residues 235 to 288 form the SOCS box domain; sequence QLCEKLTVLCSAPGTLKTLSRYAVRRSLGLQYLPDAVKGLPLPASLKEYLLLIE.

This sequence belongs to the ankyrin SOCS box (ASB) family. As to quaternary structure, interacts with TBK1; this interaction promotes TBK1 proteasomal degradation. Post-translationally, phosphorylated by TBK1.

The protein localises to the cytoplasm. The protein operates within protein modification; protein ubiquitination. Functionally, may be a substrate-recognition component of a SCF-like ECS (Elongin-Cullin-SOCS-box protein) E3 ubiquitin-protein ligase complex which mediates the ubiquitination and subsequent proteasomal degradation of target proteins. Inhibits IFN-beta production through the IRF3 signaling pathway by targeting TBK1 via 'Lys-48'-linked ubiquitination, leading to its proteasomal degradation. The polypeptide is Ankyrin repeat and SOCS box protein 8 (ASB8) (Bos taurus (Bovine)).